Reading from the N-terminus, the 578-residue chain is Vacuolar protein 8 (578 aa).

Glycine 2 carries the N-myristoyl glycine lipid modification. Residues cysteine 4, cysteine 5, and cysteine 7 are each lipidated (S-palmitoyl cysteine). Phosphoserine occurs at positions 11 and 16. ARM repeat units lie at residues 37–75 (DKDQLDFYSGGPLKALTTLVYSDNLNLQRSAALAFAEIT), 76–114 (EKYVRQVSREVLEPILILLQSQDPQIQVAACAALGNLAV), 116–155 (NENKLLIVEMGGLEPLINQMMGDNVEVQCNAVGCITNLAT), 157–196 (DDNKHKIATSGALIPLTKLAKSKHIRVQRNATGALLNMTH), 198–237 (EENRKELVNAGAVPVLVSLLSSTDPDVQYYCTTALSNIAV), 239–280 (EANR…NLAS), 282–321 (TSYQLEIVRAGGLPHLVKLIQSDSIPLVLASVACIRNISI), 323–363 (PLNE…NLAA), and 407–446 (DVSKLDLLEANILDALIPMTFSQNQEVSGNAAAALANLCS). A Glycyl lysine isopeptide (Lys-Gly) (interchain with G-Cter in ubiquitin) cross-link involves residue lysine 77. Lysine 515 is covalently cross-linked (Glycyl lysine isopeptide (Lys-Gly) (interchain with G-Cter in ubiquitin)). A disordered region spans residues 527-557 (SGIDVKNPGSNNNPSSNDNNSNNNDTGSEHQ). The segment covering 533–552 (NPGSNNNPSSNDNNSNNNDT) has biased composition (low complexity).

This sequence belongs to the beta-catenin family. As to quaternary structure, interacts with NVJ1. Forms heterotetramers of two VAC8 and two NVJ1 or two VAC8 and two ATG13. Palmitoylated on one or more of its N-terminal cysteine residues by PFA3, which is required for vacuole fusion.

It localises to the vacuole membrane. Functions in both vacuole inheritance and protein targeting from the cytoplasm to vacuole (cvt). Involved in the formation of nucleus-vacuole junctions (NVJs) during piecemeal microautophagy of the nucleus (PMN). NVJs are interorganelle interfaces mediated by NVJ1 in the nuclear envelope and VAC8 on the vacuole membrane. Together, NVJ1 and VAC8 form Velcro-like patches through which teardrop-like portions of the nucleus are pinched off into the vacuolar lumen and degraded by the PMN process. The protein is Vacuolar protein 8 (VAC8) of Saccharomyces cerevisiae (strain ATCC 204508 / S288c) (Baker's yeast).